We begin with the raw amino-acid sequence, 115 residues long: U3-lycotoxin-Ls1e (115 aa).

The first 20 residues, methionine 1–alanine 20, serve as a signal peptide directing secretion. A propeptide spanning residues glutamate 21–arginine 44 is cleaved from the precursor. Intrachain disulfides connect cysteine 48–cysteine 63, cysteine 55–cysteine 72, cysteine 62–cysteine 87, and cysteine 74–cysteine 85.

The protein belongs to the neurotoxin 19 (CSTX) family. 01 subfamily. In terms of tissue distribution, expressed by the venom gland.

The protein resides in the secreted. The protein is U3-lycotoxin-Ls1e of Lycosa singoriensis (Wolf spider).